A 517-amino-acid polypeptide reads, in one-letter code: Bifunctional purine biosynthesis protein PurH (517 aa).

The region spanning 1 to 146 is the MGS-like domain; that stretch reads MAPIALLSVS…KNHAHVAVLT (146 aa).

This sequence belongs to the PurH family.

It carries out the reaction (6R)-10-formyltetrahydrofolate + 5-amino-1-(5-phospho-beta-D-ribosyl)imidazole-4-carboxamide = 5-formamido-1-(5-phospho-D-ribosyl)imidazole-4-carboxamide + (6S)-5,6,7,8-tetrahydrofolate. The catalysed reaction is IMP + H2O = 5-formamido-1-(5-phospho-D-ribosyl)imidazole-4-carboxamide. Its pathway is purine metabolism; IMP biosynthesis via de novo pathway; 5-formamido-1-(5-phospho-D-ribosyl)imidazole-4-carboxamide from 5-amino-1-(5-phospho-D-ribosyl)imidazole-4-carboxamide (10-formyl THF route): step 1/1. It functions in the pathway purine metabolism; IMP biosynthesis via de novo pathway; IMP from 5-formamido-1-(5-phospho-D-ribosyl)imidazole-4-carboxamide: step 1/1. This Prochlorococcus marinus (strain MIT 9313) protein is Bifunctional purine biosynthesis protein PurH.